Reading from the N-terminus, the 338-residue chain is Nicotinate-nucleotide--dimethylbenzimidazole phosphoribosyltransferase (338 aa).

Residue Glu-305 is the Proton acceptor of the active site.

The protein belongs to the CobT family.

It catalyses the reaction 5,6-dimethylbenzimidazole + nicotinate beta-D-ribonucleotide = alpha-ribazole 5'-phosphate + nicotinate + H(+). The protein operates within nucleoside biosynthesis; alpha-ribazole biosynthesis; alpha-ribazole from 5,6-dimethylbenzimidazole: step 1/2. Functionally, catalyzes the synthesis of alpha-ribazole-5'-phosphate from nicotinate mononucleotide (NAMN) and 5,6-dimethylbenzimidazole (DMB). The polypeptide is Nicotinate-nucleotide--dimethylbenzimidazole phosphoribosyltransferase (Rhizobium etli (strain ATCC 51251 / DSM 11541 / JCM 21823 / NBRC 15573 / CFN 42)).